Consider the following 67-residue polypeptide: Large ribosomal subunit protein bL32 (67 aa).

The segment covering 1 to 19 (MAVPKRKMSRSNTRARRSQ) has biased composition (basic residues). Residues 1–21 (MAVPKRKMSRSNTRARRSQWK) are disordered.

This sequence belongs to the bacterial ribosomal protein bL32 family.

The sequence is that of Large ribosomal subunit protein bL32 from Clavibacter sepedonicus (Clavibacter michiganensis subsp. sepedonicus).